Here is a 400-residue protein sequence, read N- to C-terminus: MLEFMDYVQFAFYNATKWNYENSYSQLTATAKGLLDFETPGGLRFNLSSLSSPNFATSYALGSVGLVDGSLSYLYSSLPLRTTAQSAKIDLHEIIRGYRQIQELRRVDEPWMLEQWHGGRRIDKRDTLLYGRLYLPQSTLEALYLRRITPTQQVRITAVSDSRLRNGGTILALHQYDTGKYSTETLYSTDGGLLGLRGLYNFGPDPRKEVTEPPKQMPRIDDKFYGRFSAGAELYYGTLNKSGGVSVGGRFATLPAHRGIPLTATLTLNPLMGNISSTYAVRAGKNLSLCSRLDFNVYSYESDLVLGCELWKMRAPVEERRERSMEAKLAWRLDEVDLEKEKKPEEVAGVLKARVDQNLKVGLVWEGRVKELLFTLGTSIDMKRRDQPFRALGLELQYSS.

This sequence belongs to the MDM10 family. As to quaternary structure, component of the ER-mitochondria encounter structure (ERMES) or MDM complex, composed of mmm1, mdm10, mdm12 and mdm34. Associates with the mitochondrial outer membrane sorting assembly machinery SAM(core) complex.

The protein resides in the mitochondrion outer membrane. In terms of biological role, component of the ERMES/MDM complex, which serves as a molecular tether to connect the endoplasmic reticulum and mitochondria. Components of this complex are involved in the control of mitochondrial shape and protein biogenesis and may function in phospholipid exchange. mdm10 is involved in the late assembly steps of the general translocase of the mitochondrial outer membrane (TOM complex). Functions in the tom40-specific route of the assembly of outer membrane beta-barrel proteins, including the association of tom40 with the receptor tom22 and small TOM proteins. Can associate with the SAM(core) complex as well as the mdm12-mmm1 complex, both involved in late steps of the major beta-barrel assembly pathway, that is responsible for biogenesis of all outer membrane beta-barrel proteins. May act as a switch that shuttles between both complexes and channels precursor proteins into the tom40-specific pathway. Plays a role in mitochondrial morphology and in the inheritance of mitochondria. In Sclerotinia sclerotiorum (strain ATCC 18683 / 1980 / Ss-1) (White mold), this protein is Mitochondrial distribution and morphology protein 10 (mdm10).